Here is a 72-residue protein sequence, read N- to C-terminus: uncharacterized protein (72 aa).

The helical transmembrane segment at 46–66 (AIFVFNLCFIPNLCVACIFNV) threads the bilayer.

It localises to the membrane. This is an uncharacterized protein from Saccharomyces cerevisiae (strain ATCC 204508 / S288c) (Baker's yeast).